A 144-amino-acid chain; its full sequence is Large ribosomal subunit protein uL11 (144 aa).

The protein belongs to the universal ribosomal protein uL11 family. In terms of assembly, part of the ribosomal stalk of the 50S ribosomal subunit. Interacts with L10 and the large rRNA to form the base of the stalk. L10 forms an elongated spine to which L12 dimers bind in a sequential fashion forming a multimeric L10(L12)X complex. Post-translationally, one or more lysine residues are methylated.

Functionally, forms part of the ribosomal stalk which helps the ribosome interact with GTP-bound translation factors. The chain is Large ribosomal subunit protein uL11 from Acidiphilium cryptum (strain JF-5).